A 309-amino-acid polypeptide reads, in one-letter code: MRRVILNNPRGFCAGVVRAIQVVETALEKWGAPIYVKHEIVHNRHVVDDLKRRGAIFIEDLSDVPSGEKVVYSAHGIPPEVREEARTRNLFDIDATCVLVTKIHSAVKLYASKGYQIILIGKKKHVEVIGIRGEAPESVTVVEKVEDVANLPFEESVPLFFVTQTTLSLDDVAEITQALKVRYPHIITLPSSSVCYATQNRQEALRSVLPKVNFVYVIGDVQSSNSNRLREVAEKRNIPARLVNSPDHISDEILNYSGDIAITAGASTPEHIVQSCISRLKELIPDLQVEEDIFAIEDVVFQPPKELRN.

Residue cysteine 13 coordinates [4Fe-4S] cluster. (2E)-4-hydroxy-3-methylbut-2-enyl diphosphate-binding residues include histidine 42 and histidine 75. Dimethylallyl diphosphate-binding residues include histidine 42 and histidine 75. Isopentenyl diphosphate contacts are provided by histidine 42 and histidine 75. Position 97 (cysteine 97) interacts with [4Fe-4S] cluster. Histidine 125 provides a ligand contact to (2E)-4-hydroxy-3-methylbut-2-enyl diphosphate. Histidine 125 contacts dimethylallyl diphosphate. Residue histidine 125 participates in isopentenyl diphosphate binding. Glutamate 127 acts as the Proton donor in catalysis. A (2E)-4-hydroxy-3-methylbut-2-enyl diphosphate-binding site is contributed by threonine 165. [4Fe-4S] cluster is bound at residue cysteine 195. Serine 223, serine 224, asparagine 225, and serine 267 together coordinate (2E)-4-hydroxy-3-methylbut-2-enyl diphosphate. Positions 223, 224, 225, and 267 each coordinate dimethylallyl diphosphate. Isopentenyl diphosphate-binding residues include serine 223, serine 224, asparagine 225, and serine 267.

This sequence belongs to the IspH family. The cofactor is [4Fe-4S] cluster.

It catalyses the reaction isopentenyl diphosphate + 2 oxidized [2Fe-2S]-[ferredoxin] + H2O = (2E)-4-hydroxy-3-methylbut-2-enyl diphosphate + 2 reduced [2Fe-2S]-[ferredoxin] + 2 H(+). The enzyme catalyses dimethylallyl diphosphate + 2 oxidized [2Fe-2S]-[ferredoxin] + H2O = (2E)-4-hydroxy-3-methylbut-2-enyl diphosphate + 2 reduced [2Fe-2S]-[ferredoxin] + 2 H(+). It functions in the pathway isoprenoid biosynthesis; dimethylallyl diphosphate biosynthesis; dimethylallyl diphosphate from (2E)-4-hydroxy-3-methylbutenyl diphosphate: step 1/1. The protein operates within isoprenoid biosynthesis; isopentenyl diphosphate biosynthesis via DXP pathway; isopentenyl diphosphate from 1-deoxy-D-xylulose 5-phosphate: step 6/6. Its function is as follows. Catalyzes the conversion of 1-hydroxy-2-methyl-2-(E)-butenyl 4-diphosphate (HMBPP) into a mixture of isopentenyl diphosphate (IPP) and dimethylallyl diphosphate (DMAPP). Acts in the terminal step of the DOXP/MEP pathway for isoprenoid precursor biosynthesis. In Chlamydia caviae (strain ATCC VR-813 / DSM 19441 / 03DC25 / GPIC) (Chlamydophila caviae), this protein is 4-hydroxy-3-methylbut-2-enyl diphosphate reductase.